The sequence spans 107 residues: Endonuclease ALBA3 (107 aa).

N6-acetyllysine occurs at positions 23 and 32.

This sequence belongs to the histone-like Alba family. As to quaternary structure, homodimer. Interacts (acetylated and unacetylated) with Sir2A. The cofactor is a divalent metal cation. Acetylated. Exists in both acetylated and unacetylated forms but predominantly in an acetylated form. Deacetylated by Sir2A.

The protein localises to the nucleus. It is found in the chromosome. The protein resides in the telomere. Its subcellular location is the cytoplasm. Its activity is regulated as follows. Mild acetylation lowers protein interaction with DNA and high acetylation abolishes DNA-binding activity. DNA binding and endonuclease activity is modulated via deacetylation of Lys-23 by Sir2A. Inhibited in the presence of EDTA and EGTA. Possesses DNA-binding and endonuclease activities. Binds DNA cooperatively in sequence-independent manner at the DNA minor groove. Exhibits apurinic/apyrimidinic site-driven endonuclease activity. Binds RNA; shows high affinity for poly(A) and a lower affinity for poly(U) templates. In vitro, prevents transcription after DNA binding. Associates with the telomeric region, the subtelomeric TARE6 repeat sequence and the var gene promoters. In Plasmodium falciparum (isolate 3D7), this protein is Endonuclease ALBA3.